Here is a 197-residue protein sequence, read N- to C-terminus: Adenylate kinase 1 (197 aa).

19–24 (GSGKGT) contributes to the ATP binding site. Residues 39–68 (SSGDLLRAEVQSGSPKGKELKAMMERGELV) form an NMP region. AMP-binding positions include serine 40, arginine 45, 95–98 (GYPR), and glutamine 102. The interval 132–142 (KRAETSNRVDD) is LID. ATP is bound at residue arginine 133. Arginine 139 and arginine 150 together coordinate AMP. An ATP-binding site is contributed by glycine 178.

The protein belongs to the adenylate kinase family. AK1 subfamily. In terms of assembly, monomer. Mg(2+) serves as cofactor.

The protein localises to the cytoplasm. It catalyses the reaction AMP + ATP = 2 ADP. Its pathway is purine metabolism; purine nucleotide biosynthesis. In terms of biological role, catalyzes the reversible transfer of the terminal phosphate group between ATP and AMP. Plays an important role in cellular energy homeostasis and in adenine nucleotide metabolism. This is Adenylate kinase 1 from Schistosoma mansoni (Blood fluke).